The chain runs to 348 residues: Ninja-family protein AFP2 (348 aa).

The disordered stretch occupies residues 186-272; the sequence is DSDGGGATGG…VDRKGKGMAT (87 aa). Positions 187-197 are enriched in gly residues; sequence SDGGGATGGGS. Polar residues-rich tracts occupy residues 207–216 and 228–244; these read KNQQGSSNSC and CSSN…SVTR. The span at 247-267 shows a compositional bias: basic and acidic residues; it reads KVNENENEKRVRSEDSVDRKG.

It belongs to the Ninja family. As to quaternary structure, forms a homodimer and heterodimer with AFP1 and AFP3. Interacts with ABI5/DPBF1, DPBF2, AREB3/DPBF3, EEL/DPBF4, ABF1, ABF3/DPBF5 and ABF4/AREB2.

Its subcellular location is the nucleus. In terms of biological role, acts as a negative regulator of abscisic acid (ABA) response during germination through the ubiquitin-mediated proteolysis of ABI5/DPBF1. The protein is Ninja-family protein AFP2 (AFP2) of Arabidopsis thaliana (Mouse-ear cress).